The following is a 146-amino-acid chain: Probable glycine cleavage system H protein 3 (146 aa).

The 83-residue stretch at 29–111 (VVSVGMTDLG…PYGSWIIKVS (83 aa)) folds into the Lipoyl-binding domain. N6-lipoyllysine is present on Lys-71.

This sequence belongs to the GcvH family. As to quaternary structure, the glycine cleavage system is composed of four proteins: P, T, L and H. (R)-lipoate serves as cofactor.

Functionally, the glycine cleavage system catalyzes the degradation of glycine. The H protein shuttles the methylamine group of glycine from the P protein to the T protein. This Sulfolobus acidocaldarius (strain ATCC 33909 / DSM 639 / JCM 8929 / NBRC 15157 / NCIMB 11770) protein is Probable glycine cleavage system H protein 3.